The sequence spans 183 residues: Ly6/PLAUR domain-containing protein 6B (183 aa).

The first 39 residues, 1-39 (MLYKSSDRPAHKVSMLLLCHALAIAVVQIVIFSESWAFA), serve as a signal peptide directing secretion. The UPAR/Ly6 domain maps to 60 to 151 (FKCFTCENAG…VELPTNHTNA (92 aa)). A sufficient for inhibiting alpha-7 nAChR currents region spans residues 60–154 (FKCFTCENAG…PTNHTNAVFA (95 aa)). Cystine bridges form between Cys-62-Cys-90, Cys-65-Cys-74, Cys-83-Cys-109, Cys-115-Cys-134, Cys-120-Cys-131, and Cys-135-Cys-140. Residue Ser-164 is the site of GPI-anchor amidated serine attachment. The propeptide at 165–183 (SAPTLYLPVLAWVFVLPLL) is removed in mature form.

The protein resides in the cell membrane. In terms of biological role, likely acts as a modulator of nicotinic acetylcholine receptors (nAChRs) activity. In vitro acts on nAChRs in a subtype- and stoichiometry-dependent manner. Modulates specifically alpha-3(3):beta-4(2) nAChRs by enhancing the sensitivity to ACh, decreasing ACh-induced maximal current response and increasing the rate of desensitization to ACh; has no effect on alpha-7 homomeric nAChRs; modulates alpha-3(2):alpha-5:beta-4(2) nAChRs in the context of CHRNA5/alpha-5 variant Asn-398 but not its wild-type sequence. However, according to another report in vitro it can weakly inhibits alpha-7 nAChRs. In Homo sapiens (Human), this protein is Ly6/PLAUR domain-containing protein 6B (LYPD6B).